A 500-amino-acid polypeptide reads, in one-letter code: L-arabinose isomerase (500 aa).

Residues Glu-306, Glu-333, His-350, and His-450 each contribute to the Mn(2+) site.

This sequence belongs to the arabinose isomerase family. In terms of assembly, homohexamer. Mn(2+) is required as a cofactor.

The enzyme catalyses beta-L-arabinopyranose = L-ribulose. It functions in the pathway carbohydrate degradation; L-arabinose degradation via L-ribulose; D-xylulose 5-phosphate from L-arabinose (bacterial route): step 1/3. Catalyzes the conversion of L-arabinose to L-ribulose. This Salmonella typhi protein is L-arabinose isomerase.